A 351-amino-acid chain; its full sequence is Molybdenum import ATP-binding protein ModC (351 aa).

An ABC transporter domain is found at 1 to 229 (MLEINIHQQL…DILADWQSET (229 aa)). An ATP-binding site is contributed by 31 to 38 (GRSGAGKS). A Mop domain is found at 290–351 (HSSIRNILNG…IYVQIKSVSL (62 aa)).

It belongs to the ABC transporter superfamily. Molybdate importer (TC 3.A.1.8) family. The complex is composed of two ATP-binding proteins (ModC), two transmembrane proteins (ModB) and a solute-binding protein (ModA).

It is found in the cell inner membrane. It carries out the reaction molybdate(out) + ATP + H2O = molybdate(in) + ADP + phosphate + H(+). Functionally, part of the ABC transporter complex ModABC involved in molybdenum import. Responsible for energy coupling to the transport system. The sequence is that of Molybdenum import ATP-binding protein ModC from Haemophilus ducreyi (strain 35000HP / ATCC 700724).